The following is a 509-amino-acid chain: tRNA-2-methylthio-N(6)-dimethylallyladenosine synthase (509 aa).

The segment covering 1–15 (MNEQQRLASRQANSS) has biased composition (polar residues). The disordered stretch occupies residues 1–25 (MNEQQRLASRQANSSTKKEEKDYSK). Positions 16-25 (TKKEEKDYSK) are enriched in basic and acidic residues. The MTTase N-terminal domain occupies 66–184 (RKFYIRTYGC…LPYILKDAMF (119 aa)). Positions 75, 111, 145, 221, 225, and 228 each coordinate [4Fe-4S] cluster. The region spanning 207–437 (RRGDIKAWVN…NTLVNEYGVN (231 aa)) is the Radical SAM core domain. One can recognise a TRAM domain in the interval 440–503 (KRYIGQIVEV…TWSLNGELVK (64 aa)).

The protein belongs to the methylthiotransferase family. MiaB subfamily. Monomer. Requires [4Fe-4S] cluster as cofactor.

Its subcellular location is the cytoplasm. It catalyses the reaction N(6)-dimethylallyladenosine(37) in tRNA + (sulfur carrier)-SH + AH2 + 2 S-adenosyl-L-methionine = 2-methylsulfanyl-N(6)-dimethylallyladenosine(37) in tRNA + (sulfur carrier)-H + 5'-deoxyadenosine + L-methionine + A + S-adenosyl-L-homocysteine + 2 H(+). Its function is as follows. Catalyzes the methylthiolation of N6-(dimethylallyl)adenosine (i(6)A), leading to the formation of 2-methylthio-N6-(dimethylallyl)adenosine (ms(2)i(6)A) at position 37 in tRNAs that read codons beginning with uridine. This is tRNA-2-methylthio-N(6)-dimethylallyladenosine synthase from Bacillus mycoides (strain KBAB4) (Bacillus weihenstephanensis).